A 258-amino-acid polypeptide reads, in one-letter code: NAD kinase (258 aa).

Asp-45 (proton acceptor) is an active-site residue. NAD(+) contacts are provided by residues 45–46, 117–118, Asp-147, Ala-155, 158–163, and Ala-182; these read DG, NE, and TAYNYS.

It belongs to the NAD kinase family. A divalent metal cation is required as a cofactor.

The protein resides in the cytoplasm. It carries out the reaction NAD(+) + ATP = ADP + NADP(+) + H(+). In terms of biological role, involved in the regulation of the intracellular balance of NAD and NADP, and is a key enzyme in the biosynthesis of NADP. Catalyzes specifically the phosphorylation on 2'-hydroxyl of the adenosine moiety of NAD to yield NADP. This is NAD kinase from Xanthomonas campestris pv. campestris (strain 8004).